The sequence spans 300 residues: tRNA dimethylallyltransferase 1 (300 aa).

Glycine 13–threonine 20 is a binding site for ATP. Threonine 15–threonine 20 contributes to the substrate binding site. Residues aspartate 38–glutamine 41 form an interaction with substrate tRNA region.

It belongs to the IPP transferase family. As to quaternary structure, monomer. Mg(2+) serves as cofactor.

The catalysed reaction is adenosine(37) in tRNA + dimethylallyl diphosphate = N(6)-dimethylallyladenosine(37) in tRNA + diphosphate. Catalyzes the transfer of a dimethylallyl group onto the adenine at position 37 in tRNAs that read codons beginning with uridine, leading to the formation of N6-(dimethylallyl)adenosine (i(6)A). The sequence is that of tRNA dimethylallyltransferase 1 from Porphyromonas gingivalis (strain ATCC BAA-308 / W83).